The sequence spans 65 residues: Putative antitoxin PF2058 (65 aa).

The protein belongs to the UPF0165 family.

Possibly the antitoxin component of a type II toxin-antitoxin (TA) system. The chain is Putative antitoxin PF2058 from Pyrococcus furiosus (strain ATCC 43587 / DSM 3638 / JCM 8422 / Vc1).